Here is an 829-residue protein sequence, read N- to C-terminus: Dipeptidyl peptidase family member 2 (829 aa).

Over 1–27 (MENDNYDVEEQGCSVFNGKHGYFARSC) the chain is Cytoplasmic. A helical; Signal-anchor for type II membrane protein membrane pass occupies residues 28 to 48 (CVVFILIICVIFVFSVIFTFM). Residues 49 to 829 (QNPINLNSDN…DCFKSNLDLL (781 aa)) lie on the Extracellular side of the membrane. N-linked (GlcNAc...) asparagine glycans are attached at residues Asn61, Asn66, Asn183, Asn209, Asn314, and Asn359. A disulfide bond links Cys514 and Cys533. Catalysis depends on Ser691, which acts as the Charge relay system. Cys711 and Cys821 are disulfide-bonded. N-linked (GlcNAc...) asparagine glycosylation is present at Asn754. Active-site charge relay system residues include Asp768 and His800.

It belongs to the peptidase S9B family. DPPIV subfamily.

It localises to the cell membrane. Functionally, removes N-terminal dipeptides sequentially from polypeptides. Essential for control of distal tip cell migration. This Caenorhabditis elegans protein is Dipeptidyl peptidase family member 2 (dpf-2).